The chain runs to 329 residues: Acetyl-coenzyme A carboxylase carboxyl transferase subunit alpha (329 aa).

The CoA carboxyltransferase C-terminal domain maps to 40 to 294; that stretch reads QLETLAARRR…KNALEKHLSE (255 aa).

Belongs to the AccA family. As to quaternary structure, acetyl-CoA carboxylase is a heterohexamer composed of biotin carboxyl carrier protein (AccB), biotin carboxylase (AccC) and two subunits each of ACCase subunit alpha (AccA) and ACCase subunit beta (AccD).

The protein localises to the cytoplasm. The enzyme catalyses N(6)-carboxybiotinyl-L-lysyl-[protein] + acetyl-CoA = N(6)-biotinyl-L-lysyl-[protein] + malonyl-CoA. The protein operates within lipid metabolism; malonyl-CoA biosynthesis; malonyl-CoA from acetyl-CoA: step 1/1. Functionally, component of the acetyl coenzyme A carboxylase (ACC) complex. First, biotin carboxylase catalyzes the carboxylation of biotin on its carrier protein (BCCP) and then the CO(2) group is transferred by the carboxyltransferase to acetyl-CoA to form malonyl-CoA. In Prochlorococcus marinus (strain NATL1A), this protein is Acetyl-coenzyme A carboxylase carboxyl transferase subunit alpha.